The primary structure comprises 264 residues: 2-hydroxyhexa-2,4-dienoate hydratase (264 aa).

Belongs to the hydratase/decarboxylase family.

The catalysed reaction is (2Z,4Z)-2-hydroxyhexa-2,4-dienoate + H2O = 4-hydroxy-2-oxohexanoate. Functionally, involved in the catatabolism of testosterone. Catalyzes the hydration of 2-hydroxyhexa-2,4-dienoic acid to 4-hydroxy-2-oxohexanoic acid. This Comamonas testosteroni (Pseudomonas testosteroni) protein is 2-hydroxyhexa-2,4-dienoate hydratase (tesE).